A 373-amino-acid chain; its full sequence is Chaperone protein DnaJ (373 aa).

The region spanning 4–68 (NYYQILGVSK…QKRAAYDRLG (65 aa)) is the J domain. The CR-type zinc-finger motif lies at 136–214 (GIEKNISFSS…CHGMGRYHKQ (79 aa)). Positions 149, 152, 166, 169, 188, 191, 202, and 205 each coordinate Zn(2+). 4 CXXCXGXG motif repeats span residues 149-156 (CDTCHGSG), 166-173 (CDACSGVG), 188-195 (CHKCQGNG), and 202-209 (CKKCHGMG).

This sequence belongs to the DnaJ family. As to quaternary structure, homodimer. Zn(2+) serves as cofactor.

The protein localises to the cytoplasm. Functionally, participates actively in the response to hyperosmotic and heat shock by preventing the aggregation of stress-denatured proteins and by disaggregating proteins, also in an autonomous, DnaK-independent fashion. Unfolded proteins bind initially to DnaJ; upon interaction with the DnaJ-bound protein, DnaK hydrolyzes its bound ATP, resulting in the formation of a stable complex. GrpE releases ADP from DnaK; ATP binding to DnaK triggers the release of the substrate protein, thus completing the reaction cycle. Several rounds of ATP-dependent interactions between DnaJ, DnaK and GrpE are required for fully efficient folding. Also involved, together with DnaK and GrpE, in the DNA replication of plasmids through activation of initiation proteins. This Rickettsia africae (strain ESF-5) protein is Chaperone protein DnaJ.